Reading from the N-terminus, the 228-residue chain is Translation initiation factor 6 (228 aa).

It belongs to the eIF-6 family.

In terms of biological role, binds to the 50S ribosomal subunit and prevents its association with the 30S ribosomal subunit to form the 70S initiation complex. The sequence is that of Translation initiation factor 6 from Thermococcus onnurineus (strain NA1).